We begin with the raw amino-acid sequence, 192 residues long: MATKIRLQRHGRKGYAFYKIVVADSRAPRDGKFIERIGSYNPNTNPATIDLNFERALYWIGVGAQPTDTARNILSREGVLMMKHLLGGVKKGAFDQAAAENKFEAWLKGKKDALNNMKAKVKEAAVADDKVKLEAEKAVNKARAEAVAEKKAAEAKAKAEAEAAAAAEEAAETEETPVEAAAEEAPAAESAE.

A disordered region spans residues 153-192 (AEAKAKAEAEAAAAAEEAAETEETPVEAAAEEAPAAESAE). Positions 178–192 (VEAAAEEAPAAESAE) are enriched in low complexity.

Belongs to the bacterial ribosomal protein bS16 family.

The polypeptide is Small ribosomal subunit protein bS16 (Porphyromonas gingivalis (strain ATCC BAA-308 / W83)).